We begin with the raw amino-acid sequence, 129 residues long: Small ribosomal subunit protein uS9 (129 aa).

The interval 108-129 (RMVERKKYGKKKARKSFQFSKR) is disordered. Residues 114–129 (KYGKKKARKSFQFSKR) show a composition bias toward basic residues.

This sequence belongs to the universal ribosomal protein uS9 family.

This chain is Small ribosomal subunit protein uS9, found in Chlorobaculum tepidum (strain ATCC 49652 / DSM 12025 / NBRC 103806 / TLS) (Chlorobium tepidum).